Here is a 52-residue protein sequence, read N- to C-terminus: Rubredoxin (52 aa).

The region spanning 1 to 52 (MEKWQCTVCGYIYDPEVGDPTQNIPPGTKFEDLPDDWVCPDCGVGKDQFEKI) is the Rubredoxin-like domain. 4 residues coordinate Fe cation: Cys-6, Cys-9, Cys-39, and Cys-42.

The protein belongs to the rubredoxin family. It depends on Fe(3+) as a cofactor.

Its function is as follows. Rubredoxin is a small nonheme, iron protein lacking acid-labile sulfide. Its single Fe, chelated to 4 Cys, functions as an electron acceptor and may also stabilize the conformation of the molecule. This Thermoanaerobacterium thermosaccharolyticum (strain ATCC 7956 / DSM 571 / NCIMB 9385 / NCA 3814 / NCTC 13789 / WDCM 00135 / 2032) (Clostridium thermosaccharolyticum) protein is Rubredoxin.